Reading from the N-terminus, the 342-residue chain is C-X-C chemokine receptor type 6 (342 aa).

Residues 1–32 (MAEHDYHEDYGFSSFNDSSQEEHQDFLQFSKV) are Extracellular-facing. An N-linked (GlcNAc...) asparagine glycan is attached at N16. Residues 33 to 59 (FLPCMYLVVFVCGLVGNSLVLVISIFY) form a helical membrane-spanning segment. The Cytoplasmic portion of the chain corresponds to 60–68 (HKLQSLTDV). A helical membrane pass occupies residues 69 to 89 (FLVNLPLADLVFVCTLPFWAY). Over 90 to 103 (AGIHEWVFGQVMCK) the chain is Extracellular. C102 and C180 are oxidised to a cystine. Residues 104–125 (SLLGIYTINFYTSMLILTCITV) traverse the membrane as a helical segment. The Cytoplasmic segment spans residues 126-143 (DRFIVVVKATKAYNQQAK). The chain crosses the membrane as a helical span at residues 144 to 164 (RMTWGKVTSLLIWVISLLVSL). Topologically, residues 165–187 (PQIIYGNVFNLDKLICGYHDEAI) are extracellular. Residues 188–215 (STVVLATQMTLGFFLPLLTMIVCYSVII) traverse the membrane as a helical segment. Residues 216–231 (KTLLHAGGFQKHRSLK) lie on the Cytoplasmic side of the membrane. The helical transmembrane segment at 232-259 (IIFLVMAVFLLTQMPFNLMKFIRSTHWE) threads the bilayer. Residues 260 to 275 (YYAMTSFHYTIMVTEA) lie on the Extracellular side of the membrane. A helical membrane pass occupies residues 276–293 (IAYLRACLNPVLYAFVSL). At 294-342 (KFRKNFWKLVKDIGCLPYLGVSHQWKSSEDNSKTFSASHNVEATSMFQL) the chain is on the cytoplasmic side.

It belongs to the G-protein coupled receptor 1 family. In terms of tissue distribution, expressed in lymphoid tissues and activated T cells.

It localises to the cell membrane. Functionally, receptor for the C-X-C chemokine CXCL16. Used as a coreceptor by SIVs and by strains of HIV-2 and m-tropic HIV-1. In Homo sapiens (Human), this protein is C-X-C chemokine receptor type 6 (CXCR6).